The following is a 340-amino-acid chain: HTH-type transcriptional regulator PtxS (340 aa).

In terms of domain architecture, HTH lacI-type spans 12 to 67 (VTISEVAQAAGVSKATVSRYIGGDRQLLADATAQRIEAVIEQLGYRPNRMASALKR). Residues 14-33 (ISEVAQAAGVSKATVSRYIG) constitute a DNA-binding region (H-T-H motif).

Homodimer.

2-ketogluconate acts as a molecular effector and causes dissociation of PtxS from its target promoter. Glucose negatively affects the molecular binding of PtxS and 2KGA, and gluconic acid inhibits the PtxS-2KGA binding reaction. In terms of biological role, involved in the regulation of 2-ketogluconic acid metabolism via the control of the expression of the kgu operon. Binds directly to a 14-bp palindrome sequence via its conserved HTH motif. The chain is HTH-type transcriptional regulator PtxS from Pseudomonas plecoglossicida.